Reading from the N-terminus, the 54-residue chain is Large ribosomal subunit protein bL33 (54 aa).

The protein belongs to the bacterial ribosomal protein bL33 family.

This chain is Large ribosomal subunit protein bL33, found in Petrotoga mobilis (strain DSM 10674 / SJ95).